The sequence spans 377 residues: Ipis-1 (377 aa).

N11 and N226 each carry an N-linked (GlcNAc...) asparagine glycan.

The protein belongs to the serpin family. Female salivary gland. Not detected in midgut and other tissues.

The protein localises to the secreted. Its function is as follows. Salivary protein with immunosuppressive properties that can modulate blood feeding of ticks on vertebrate species. Inhibits proliferation of bovine peripheral blood mononuclear cells (PBMCs). Inhibits IFN-gamma (IFNG) production by bovine PBMCs. This Ixodes persulcatus (Taiga tick) protein is Ipis-1.